We begin with the raw amino-acid sequence, 80 residues long: Conotoxin Bu14 (80 aa).

A signal peptide spans 1–8; that stretch reads AACQLGTA. Positions 9 to 40 are excised as a propeptide; sequence ASFARDKQDYPAVRSDGRQDSKDSTLDRIAKR. 3 disulfide bridges follow: Cys-41-Cys-55, Cys-48-Cys-59, and Cys-54-Cys-69.

This sequence belongs to the conotoxin O1 superfamily. Expressed by the venom duct.

The protein resides in the secreted. This is Conotoxin Bu14 from Conus bullatus (Bubble cone).